We begin with the raw amino-acid sequence, 144 residues long: ATP synthase epsilon chain (144 aa).

This sequence belongs to the ATPase epsilon chain family. In terms of assembly, F-type ATPases have 2 components, CF(1) - the catalytic core - and CF(0) - the membrane proton channel. CF(1) has five subunits: alpha(3), beta(3), gamma(1), delta(1), epsilon(1). CF(0) has three main subunits: a, b and c.

It is found in the cell inner membrane. Its function is as follows. Produces ATP from ADP in the presence of a proton gradient across the membrane. The chain is ATP synthase epsilon chain from Ectopseudomonas mendocina (strain ymp) (Pseudomonas mendocina).